The following is a 162-amino-acid chain: SsrA-binding protein (162 aa).

This sequence belongs to the SmpB family.

The protein localises to the cytoplasm. Its function is as follows. Required for rescue of stalled ribosomes mediated by trans-translation. Binds to transfer-messenger RNA (tmRNA), required for stable association of tmRNA with ribosomes. tmRNA and SmpB together mimic tRNA shape, replacing the anticodon stem-loop with SmpB. tmRNA is encoded by the ssrA gene; the 2 termini fold to resemble tRNA(Ala) and it encodes a 'tag peptide', a short internal open reading frame. During trans-translation Ala-aminoacylated tmRNA acts like a tRNA, entering the A-site of stalled ribosomes, displacing the stalled mRNA. The ribosome then switches to translate the ORF on the tmRNA; the nascent peptide is terminated with the 'tag peptide' encoded by the tmRNA and targeted for degradation. The ribosome is freed to recommence translation, which seems to be the essential function of trans-translation. This chain is SsrA-binding protein, found in Buchnera aphidicola subsp. Acyrthosiphon pisum (strain 5A).